Consider the following 207-residue polypeptide: Vascular endothelial growth factor B (207 aa).

The N-terminal stretch at Met-1 to Ala-21 is a signal peptide. Cystine bridges form between Cys-78–Cys-122 and Cys-82–Cys-124. Residues Ile-140–Ala-182 are disordered.

The protein belongs to the PDGF/VEGF growth factor family. In terms of assembly, homodimer; disulfide-linked. Can also form heterodimer with VEGF.

The protein resides in the secreted. Functionally, growth factor for endothelial cells. VEGF-B167 binds heparin and neuropilin-1 whereas the binding to neuropilin-1 of VEGF-B186 is regulated by proteolysis. The sequence is that of Vascular endothelial growth factor B (Vegfb) from Rattus norvegicus (Rat).